We begin with the raw amino-acid sequence, 515 residues long: Bifunctional purine biosynthesis protein PurH (515 aa).

Residues 1–145 (MTKRALISVS…KNHASVTVVV (145 aa)) form the MGS-like domain.

Belongs to the PurH family.

It catalyses the reaction (6R)-10-formyltetrahydrofolate + 5-amino-1-(5-phospho-beta-D-ribosyl)imidazole-4-carboxamide = 5-formamido-1-(5-phospho-D-ribosyl)imidazole-4-carboxamide + (6S)-5,6,7,8-tetrahydrofolate. The enzyme catalyses IMP + H2O = 5-formamido-1-(5-phospho-D-ribosyl)imidazole-4-carboxamide. It functions in the pathway purine metabolism; IMP biosynthesis via de novo pathway; 5-formamido-1-(5-phospho-D-ribosyl)imidazole-4-carboxamide from 5-amino-1-(5-phospho-D-ribosyl)imidazole-4-carboxamide (10-formyl THF route): step 1/1. The protein operates within purine metabolism; IMP biosynthesis via de novo pathway; IMP from 5-formamido-1-(5-phospho-D-ribosyl)imidazole-4-carboxamide: step 1/1. In Streptococcus equi subsp. zooepidemicus (strain H70), this protein is Bifunctional purine biosynthesis protein PurH.